The chain runs to 313 residues: Probable pyridoxal 5'-phosphate synthase subunit PDX1.2 (313 aa).

D-ribose 5-phosphate is bound at residue Asp-42. Lys-99 (schiff-base intermediate with D-ribose 5-phosphate) is an active-site residue. Gly-171 is a binding site for D-ribose 5-phosphate. Arg-183 provides a ligand contact to D-glyceraldehyde 3-phosphate. Residues Gly-232 and 253 to 254 (GS) each bind D-ribose 5-phosphate.

This sequence belongs to the PdxS/SNZ family.

The catalysed reaction is aldehydo-D-ribose 5-phosphate + D-glyceraldehyde 3-phosphate + L-glutamine = pyridoxal 5'-phosphate + L-glutamate + phosphate + 3 H2O + H(+). Its pathway is cofactor biosynthesis; pyridoxal 5'-phosphate biosynthesis. Catalyzes the formation of pyridoxal 5'-phosphate from ribose 5-phosphate (RBP), glyceraldehyde 3-phosphate (G3P) and ammonia. The ammonia is provided by PDX2. Can also use ribulose 5-phosphate and dihydroxyacetone phosphate as substrates, resulting from enzyme-catalyzed isomerization of RBP and G3P, respectively. Also plays an indirect role in resistance to singlet oxygen-generating photosensitizers. The protein is Probable pyridoxal 5'-phosphate synthase subunit PDX1.2 (PDX12) of Oryza sativa subsp. japonica (Rice).